A 344-amino-acid chain; its full sequence is tRNA N6-adenosine threonylcarbamoyltransferase (344 aa).

Positions 111 and 115 each coordinate Fe cation. Residues 133-137, Asp166, Gly179, and Asn283 each bind substrate; that span reads LVSGG. A Fe cation-binding site is contributed by Asp311.

This sequence belongs to the KAE1 / TsaD family. The cofactor is Fe(2+).

It localises to the cytoplasm. It catalyses the reaction L-threonylcarbamoyladenylate + adenosine(37) in tRNA = N(6)-L-threonylcarbamoyladenosine(37) in tRNA + AMP + H(+). Its function is as follows. Required for the formation of a threonylcarbamoyl group on adenosine at position 37 (t(6)A37) in tRNAs that read codons beginning with adenine. Is involved in the transfer of the threonylcarbamoyl moiety of threonylcarbamoyl-AMP (TC-AMP) to the N6 group of A37, together with TsaE and TsaB. TsaD likely plays a direct catalytic role in this reaction. This chain is tRNA N6-adenosine threonylcarbamoyltransferase, found in Orientia tsutsugamushi (strain Boryong) (Rickettsia tsutsugamushi).